Reading from the N-terminus, the 376-residue chain is MSEIAEVVPKIIEAIFSSVQEPFKTFNITIKPLENSRSFWSECYQILVTPNSEAHADKVVSPIFVKIPRISAINAACDPDNADENMEILRTLTAQEVTFYSDFSGIQFSGFPIPRSYYGENLGNEKMAGLACEDYSGKVYSIDFVPGFDESQVLQLLEALAHFHAKIIEISDEIPWKNYENVLYDAAYIRMLHNDTLDFEKLCPAELSGRIQEVKHAFDEDGVRNSEKKNEKLGMPLVICHNDLNASNVLWNNETGKIQAFIDFQHVSKGPVSFDIIRILCLGLSVENRRANTQRYLNHYYTTFKSHFSTAPFTFSQLEESYRTHFNFVNATSLFSLSYYYKMYKDESLDLKSGADEREHKAQEILRRTIGILDDM.

It belongs to the choline/ethanolamine kinase family.

This is an uncharacterized protein from Caenorhabditis elegans.